Reading from the N-terminus, the 319-residue chain is 7,8-didemethyl-8-hydroxy-5-deazariboflavin synthase (319 aa).

In terms of domain architecture, Radical SAM core spans 5–236 (VTYSPAYTIV…SNITLQIPPN (232 aa)). Residues cysteine 19, cysteine 23, and cysteine 26 each coordinate [4Fe-4S] cluster.

The protein belongs to the radical SAM superfamily. CofG family. In terms of assembly, consists of two subunits, CofG and CofH. Requires [4Fe-4S] cluster as cofactor.

It carries out the reaction 5-amino-5-(4-hydroxybenzyl)-6-(D-ribitylimino)-5,6-dihydrouracil + S-adenosyl-L-methionine = 7,8-didemethyl-8-hydroxy-5-deazariboflavin + 5'-deoxyadenosine + L-methionine + NH4(+) + H(+). The protein operates within cofactor biosynthesis; coenzyme F0 biosynthesis. Its function is as follows. Catalyzes the radical-mediated synthesis of 7,8-didemethyl-8-hydroxy-5-deazariboflavin from 5-amino-5-(4-hydroxybenzyl)-6-(D-ribitylimino)-5,6-dihydrouracil. The sequence is that of 7,8-didemethyl-8-hydroxy-5-deazariboflavin synthase from Trichodesmium erythraeum (strain IMS101).